The following is a 211-amino-acid chain: Outer-membrane lipoprotein carrier protein (211 aa).

A signal peptide spans 1–25 (MRAIRMLLVSALTLGSLSATLSAHA).

It belongs to the LolA family. In terms of assembly, monomer.

Its subcellular location is the periplasm. Participates in the translocation of lipoproteins from the inner membrane to the outer membrane. Only forms a complex with a lipoprotein if the residue after the N-terminal Cys is not an aspartate (The Asp acts as a targeting signal to indicate that the lipoprotein should stay in the inner membrane). The chain is Outer-membrane lipoprotein carrier protein from Pseudomonas putida (strain W619).